The primary structure comprises 118 residues: Autophagy-related protein 8 (118 aa).

Gly-116 carries Phosphatidylethanolamine amidated glycine lipidation. The propeptide at Ser-117 to Ile-118 is removed in mature form.

This sequence belongs to the ATG8 family. As to quaternary structure, conjugation to phosphatidylethanolamine (PE) leads to homodimerization. Interacts with ATG1, ATG3, ATG4, ATG7 and ATG12. Post-translationally, the C-terminal Ser-117 and Ile-118 residues of ATG8 are removed by ATG4 to expose Gly-116 at the C-terminus. This Gly-116 forms then a thioester bond with ATG7 (E1-like activating enzyme) before being transferred to ATG3 (the specific E2 conjugating enzyme), in order to be finally amidated with phosphatidylethanolamine. This lipid modification anchors ATG8 to membranes and can be reversed by ATG4, releasing soluble ATG8.

The protein resides in the cytoplasmic vesicle. Its subcellular location is the cvt vesicle membrane. The protein localises to the autophagosome membrane. It is found in the vacuole membrane. Its function is as follows. Ubiquitin-like modifier involved in cytoplasm to vacuole transport (Cvt) vesicles and autophagosome formation. With ATG4, mediates the delivery of the vesicles and autophagosomes to the vacuole via the microtubule cytoskeleton. Required for selective autophagic degradation of the nucleus (nucleophagy) as well as for mitophagy which contributes to regulate mitochondrial quantity and quality by eliminating the mitochondria to a basal level to fulfill cellular energy requirements and preventing excess ROS production. Also participates in membrane fusion events that take place in the early secretory pathway. Also involved in endoplasmic reticulum-specific autophagic process and is essential for the survival of cells subjected to severe ER stress. The ATG8-PE conjugate mediates tethering between adjacent membranes and stimulates membrane hemifusion, leading to expansion of the autophagosomal membrane during autophagy. Moreover not only conjugation, but also subsequent ATG8-PE deconjugation is an important step required to facilitate multiple events during macroautophagy, and especially for efficient autophagosome biogenesis, the assembly of ATG9-containing tubulovesicular clusters into phagophores/autophagosomes, and for the disassembly of PAS-associated ATG components. Contributes to conidiation by regulating the conidial levels of the conidiation-related protein CP15 and mediates fungal oxidation resistance by controlling total superoxide dismutase (SOD) activity. The polypeptide is Autophagy-related protein 8 (Beauveria bassiana (strain ARSEF 2860) (White muscardine disease fungus)).